A 20-amino-acid chain; its full sequence is GIFTFEDESTTTVAPAKLYK.

It belongs to the BetVI family.

This is Protein PR-L3 from Lupinus luteus (European yellow lupine).